The primary structure comprises 123 residues: Thioredoxin domain-containing protein 17 (123 aa).

Ala2 carries the N-acetylalanine modification. Residues 41-123 (SWCPDCVQAE…NLVEMLFSED (83 aa)) enclose the Thioredoxin domain. Catalysis depends on nucleophile residues Cys43 and Cys46. Cys43 and Cys46 form a disulfide bridge.

This sequence belongs to the thioredoxin family. As to quaternary structure, interacts with TRXR1 and DYNLL1/DNCL1. In terms of processing, the oxidized protein is reduced by TRXR1. Ubiquitously expressed in cell lines.

The protein resides in the cytoplasm. Its function is as follows. Disulfide reductase. May participate in various redox reactions through the reversible oxidation of its active center dithiol to a disulfide and catalyze dithiol-disulfide exchange reactions. Modulates TNF-alpha signaling and NF-kappa-B activation. Has peroxidase activity and may contribute to the elimination of cellular hydrogen peroxide. This chain is Thioredoxin domain-containing protein 17 (TXNDC17), found in Homo sapiens (Human).